Here is a 262-residue protein sequence, read N- to C-terminus: ATP synthase subunit a 1 (262 aa).

Helical transmembrane passes span 30 to 50 (TVHI…ILVF), 91 to 111 (IAPL…MDLI), 131 to 151 (IVPT…FALM), 201 to 221 (LFGN…LMPW), and 232 to 252 (AIFH…LTIV).

It belongs to the ATPase A chain family. In terms of assembly, F-type ATPases have 2 components, CF(1) - the catalytic core - and CF(0) - the membrane proton channel. CF(1) has five subunits: alpha(3), beta(3), gamma(1), delta(1), epsilon(1). CF(0) has three main subunits: a(1), b(2) and c(9-12). The alpha and beta chains form an alternating ring which encloses part of the gamma chain. CF(1) is attached to CF(0) by a central stalk formed by the gamma and epsilon chains, while a peripheral stalk is formed by the delta and b chains.

The protein localises to the cell inner membrane. In terms of biological role, key component of the proton channel; it plays a direct role in the translocation of protons across the membrane. The chain is ATP synthase subunit a 1 from Photobacterium profundum (strain SS9).